Consider the following 582-residue polypeptide: Putative G-protein coupled receptor B0244.10 (582 aa).

A run of 4 helical transmembrane segments spans residues 25–45 (LYIILISMWTFSLAIAIPLGL), 70–90 (ITFSIACISLAITASLTGFAV), 120–140 (WTFFALIVICLIELLPFGLVI), and 159–179 (LLVQSIISSVETLVGSLVFLT). Asparagine 190 carries N-linked (GlcNAc...) asparagine glycosylation. Residues 199-218 (LTLGKWFIALYRFLFQMTNI) form a helical membrane-spanning segment. N-linked (GlcNAc...) asparagine glycans are attached at residues asparagine 221 and asparagine 237. The next 5 helical transmembrane spans lie at 253–273 (SLMIWMGFYIPSAMCFLAVLV), 296–316 (YIFVVVRLSAAILIALCIIII), 329–349 (TFAFFAVLFIIYDFSILSLLG), 377–397 (IYIIAFAIVLFSVCVAIPFGL), and 421–441 (WLLFCIACLILMGCTGTLLFV). The N-linked (GlcNAc...) asparagine glycan is linked to asparagine 457. Transmembrane regions (helical) follow at residues 475–495 (TILVILCCVELIPTGLLAAFG) and 513–533 (LIFPAIVSSLETFLGSITFLL). Asparagine 538 carries an N-linked (GlcNAc...) asparagine glycan.

Belongs to the G-protein coupled receptor 1 family. B0244 subfamily.

It localises to the cell membrane. This chain is Putative G-protein coupled receptor B0244.10, found in Caenorhabditis elegans.